The chain runs to 311 residues: tRNA dimethylallyltransferase (311 aa).

12–19 is an ATP binding site; the sequence is GPTASGKT. 14 to 19 is a binding site for substrate; it reads TASGKT. Interaction with substrate tRNA regions lie at residues 37 to 40, 161 to 165, and 241 to 246; these read DSAL, QRINR, and RCVGYR.

This sequence belongs to the IPP transferase family. In terms of assembly, monomer. The cofactor is Mg(2+).

It carries out the reaction adenosine(37) in tRNA + dimethylallyl diphosphate = N(6)-dimethylallyladenosine(37) in tRNA + diphosphate. Functionally, catalyzes the transfer of a dimethylallyl group onto the adenine at position 37 in tRNAs that read codons beginning with uridine, leading to the formation of N6-(dimethylallyl)adenosine (i(6)A). This Histophilus somni (strain 129Pt) (Haemophilus somnus) protein is tRNA dimethylallyltransferase.